A 37-amino-acid polypeptide reads, in one-letter code: Photosystem II reaction center protein K (37 aa).

Topologically, residues 1–15 (KLPEAYAIFDPLVDV) are lumenal. The helical transmembrane segment at 16–30 (LPVIPVLFFALAFVV) threads the bilayer. Residues 31–37 (QAAVGFR) are Cytoplasmic-facing.

Belongs to the PsbK family. In terms of assembly, PSII is composed of 1 copy each of membrane proteins PsbA, PsbB, PsbC, PsbD, PsbE, PsbF, PsbH, PsbI, PsbJ, PsbK, PsbL, PsbM, PsbT, PsbX, PsbY, PsbZ, Psb30/Ycf12, peripheral proteins PsbO, CyanoQ (PsbQ), PsbU, PsbV and a large number of cofactors. It forms dimeric complexes. It depends on PSII binds multiple chlorophylls, carotenoids and specific lipids. as a cofactor.

Its subcellular location is the cellular thylakoid membrane. In terms of biological role, one of the components of the core complex of photosystem II (PSII). PSII is a light-driven water:plastoquinone oxidoreductase that uses light energy to abstract electrons from H(2)O, generating O(2) and a proton gradient subsequently used for ATP formation. It consists of a core antenna complex that captures photons, and an electron transfer chain that converts photonic excitation into a charge separation. This chain is Photosystem II reaction center protein K, found in Thermostichus vulcanus (Synechococcus vulcanus).